We begin with the raw amino-acid sequence, 198 residues long: Armadillo repeat-containing protein 7 (198 aa).

ARM repeat units lie at residues 57–99 (QVLD…QAGG) and 100–140 (LPLI…TSLP). At Ser169 the chain carries Phosphoserine.

In terms of assembly, component of the minor spliceosome. Within this complex, interacts with RBM48.

In terms of biological role, as a component of the minor spliceosome, involved in the splicing of U12-type introns in pre-mRNAs. The protein is Armadillo repeat-containing protein 7 (Armc7) of Mus musculus (Mouse).